A 493-amino-acid chain; its full sequence is MTVRTRIAPSPTGDPHVGTAYVALFNLCFARQHGGQFILRIEDTDQARSTAESEQDILTALRWLGLNWDEGPDVGGPHGPYRQSERKHMYGQYAEDLVTAGHAFYCFRTPEELDAIREERKAQGLNPGIKGDLELPEEEVKRRLDAGDPYVIRMKVPDEGVCEIQDMLRGTIEIDWAQVDCQILLKSDGMPTYHLANVVDDHLMGITHVLRGEEWINSAPKHKLLYQYFGWDMPELCHLPLLRNPDKSKLSKRKNPTSINFYERMGFLPEAVTNYLGRMGWSMPDEREKFTLDEMIENFDIQRVSLGGPVFDVEKLRWLNGQWIREELSDEQFMARMQQWWFNQDDLKALVPHIKGRAEVFSDVAPMAQFMFSGMLNLKPEDFAHNKLDESQVKRVLQFALWKLEAQRHWSKNTIFADIKALAKAMDLKMGDFMFSIFVAIAGTPNSWSVMDSMALLGPDMTRSRLRHALEVMGGFSKKETKKVEKEYAALGV.

A 'HIGH' region motif is present at residues 9 to 19 (PSPTGDPHVGT). The short motif at 249 to 253 (KLSKR) is the 'KMSKS' region element. K252 contacts ATP.

It belongs to the class-I aminoacyl-tRNA synthetase family. Glutamate--tRNA ligase type 1 subfamily. In terms of assembly, monomer.

The protein resides in the cytoplasm. It carries out the reaction tRNA(Glu) + L-glutamate + ATP = L-glutamyl-tRNA(Glu) + AMP + diphosphate. Its function is as follows. Catalyzes the attachment of glutamate to tRNA(Glu) in a two-step reaction: glutamate is first activated by ATP to form Glu-AMP and then transferred to the acceptor end of tRNA(Glu). The chain is Glutamate--tRNA ligase from Marinobacter nauticus (strain ATCC 700491 / DSM 11845 / VT8) (Marinobacter aquaeolei).